We begin with the raw amino-acid sequence, 234 residues long: LexA repressor (234 aa).

A DNA-binding region (H-T-H motif) is located at residues 26 to 46; it reads FDEMKDALDLRSKSGIHRLIT. Residues 80 to 107 form a disordered region; sequence RGFTPSVIEGNLGKVRPPSPQHAEDDSD. Catalysis depends on for autocatalytic cleavage activity residues S155 and K193.

This sequence belongs to the peptidase S24 family. As to quaternary structure, homodimer.

It carries out the reaction Hydrolysis of Ala-|-Gly bond in repressor LexA.. In terms of biological role, represses a number of genes involved in the response to DNA damage (SOS response), including recA and lexA. In the presence of single-stranded DNA, RecA interacts with LexA causing an autocatalytic cleavage which disrupts the DNA-binding part of LexA, leading to derepression of the SOS regulon and eventually DNA repair. The sequence is that of LexA repressor from Rhodopseudomonas palustris (strain HaA2).